A 508-amino-acid chain; its full sequence is MGLPWYRVHTVVLNDPGRLLAVHIMHTALVAGWAGSMALYELAVFDPSDPVLDPMWRQGMFVIPFMTRLGITNSWGGWSITGGTVTNPGIWSYEGVAGSHILFSGLCFLAAIWHWVYWDLAIFSDERTGKPSLDLPKIFGIHLFLSGLACFGFGAFHVTGLYGPGIWVSDPYGLTGEVQPVNPAWGVEGFDPFVPGGIASHHIAAGTLGILAGLFHLSVRPPQRLYKGLRMGNIETVLSSSIAAVFFAAFVVAGTMWYGSATTPIELFGPTRYQWDQGYFQQEIYRRVGAGLAKNQSLSEAWSKIPEKLAFYDYIGNNPAKGGLFRAGSMDSGDGIAVGWLGHPIFRDKEGRELFVRRMPTFFETFPVVLVDGDGIVRADVPFRRAESKYSVEQVGVTIEFYGGELNGVSYSDPATVKKYARRAQLGEIFELDRATLKSDGVFRSSPRGWFTFGHASFALLFFFGHIWHGARTLFRDVFAGIDPDLDTQVEFGAFQKLGDPTTRRQAV.

Transmembrane regions (helical) follow at residues 21–36, 101–115, 140–156, 203–218, 237–252, and 457–472; these read AVHI…WAGS, ILFS…IWHW, GIHL…FGAF, IAAG…FHLS, VLSS…AFVV, and SFAL…HGAR.

It belongs to the PsbB/PsbC family. PsbB subfamily. In terms of assembly, PSII is composed of 1 copy each of membrane proteins PsbA, PsbB, PsbC, PsbD, PsbE, PsbF, PsbH, PsbI, PsbJ, PsbK, PsbL, PsbM, PsbT, PsbX, PsbY, PsbZ, Psb30/Ycf12, at least 3 peripheral proteins of the oxygen-evolving complex and a large number of cofactors. It forms dimeric complexes. Requires Binds multiple chlorophylls. PSII binds additional chlorophylls, carotenoids and specific lipids. as cofactor.

Its subcellular location is the plastid. It is found in the chloroplast thylakoid membrane. One of the components of the core complex of photosystem II (PSII). It binds chlorophyll and helps catalyze the primary light-induced photochemical processes of PSII. PSII is a light-driven water:plastoquinone oxidoreductase, using light energy to abstract electrons from H(2)O, generating O(2) and a proton gradient subsequently used for ATP formation. The polypeptide is Photosystem II CP47 reaction center protein (Oenothera biennis (German evening primrose)).